Reading from the N-terminus, the 319-residue chain is Olfactory receptor 8U8 (319 aa).

The Extracellular portion of the chain corresponds to 1-28; sequence MAHINCTQATEFILVGLTDHQELKMPLF. A glycan (N-linked (GlcNAc...) asparagine) is linked at Asn-5. Residues 29 to 49 traverse the membrane as a helical segment; that stretch reads VLFLSIYLFTVVGNLGLILLI. Residues 50 to 56 are Cytoplasmic-facing; that stretch reads RADTSLN. The helical transmembrane segment at 57–77 threads the bilayer; it reads TPMYFFLSNLAFVDFCYSSVI. At 78–97 the chain is on the extracellular side; it reads TPKMLGNFLYKQNVISFDAC. A disulfide bridge links Cys-97 with Cys-179. A helical transmembrane segment spans residues 98-118; sequence ATQLGCFLTFMVSESLLLASM. Residues 119 to 122 are Cytoplasmic-facing; that stretch reads AYDR. Residues 123–143 traverse the membrane as a helical segment; sequence YVAICNPLLYMVVMTPGICIQ. Residues 144 to 204 are Extracellular-facing; it reads LVAVPYSYSF…KQLWILACAG (61 aa). A helical transmembrane segment spans residues 205 to 225; sequence ITFICSVLIVFVSYMFIIFAI. At 226-239 the chain is on the cytoplasmic side; that stretch reads LRMSSAEGRRKAFS. A helical membrane pass occupies residues 240-260; that stretch reads TCSSHMLAVTIFYGTLIFMYL. Over 261-271 the chain is Extracellular; that stretch reads QPSSSHSLDAD. The chain crosses the membrane as a helical span at residues 272–292; that stretch reads KMASVFYTVIIPMLNPLIYSL. Residues 293–319 are Cytoplasmic-facing; the sequence is RNKDVKDALKKVIINRNHAFIFLKLRK.

This sequence belongs to the G-protein coupled receptor 1 family.

It is found in the cell membrane. Its function is as follows. Odorant receptor. This is Olfactory receptor 8U8 (OR8U8) from Homo sapiens (Human).